We begin with the raw amino-acid sequence, 160 residues long: MD-2-related lipid-recognition protein ROSY1 (160 aa).

An N-terminal signal peptide occupies residues 1–23 (MAISHTQLLLLLLVSLFFSPALC).

As to quaternary structure, interacts with SYT1. In terms of tissue distribution, expressed exclusively in roots, in epidermis and cortex cells of the root elongation zone, and lateral root cap cells at the root tip.

It localises to the cytoplasm. Functionally, involved in the regulation of gravitropic response and basipetal auxin transport in roots. Involved in salt stress tolerance. May facilitate membrane trafficking and asymmetric cell elongation via SYT1. Binds stigmasterol and dipalmitoyl phosphoethanolamine (DPPE) in vitro. This chain is MD-2-related lipid-recognition protein ROSY1, found in Arabidopsis thaliana (Mouse-ear cress).